A 449-amino-acid polypeptide reads, in one-letter code: UPF0761 membrane protein Cpha266_1653 (449 aa).

The next 6 membrane-spanning stretches (helical) occupy residues 77-97, 133-153, 173-193, 214-234, 244-264, and 277-297; these read LLSL…FPVF, SVPL…ISTI, FTLY…SLVA, LLSF…YMLV, AVYG…WFVF, and GALS…VVVL.

The protein belongs to the UPF0761 family.

The protein resides in the cell inner membrane. The sequence is that of UPF0761 membrane protein Cpha266_1653 from Chlorobium phaeobacteroides (strain DSM 266 / SMG 266 / 2430).